The primary structure comprises 89 residues: Large ribosomal subunit protein bL27 (89 aa).

Positions 1–22 are disordered; that stretch reads MAHKKAGGSSRNGRDSESKRLG.

Belongs to the bacterial ribosomal protein bL27 family.

The sequence is that of Large ribosomal subunit protein bL27 from Bartonella henselae (strain ATCC 49882 / DSM 28221 / CCUG 30454 / Houston 1) (Rochalimaea henselae).